We begin with the raw amino-acid sequence, 190 residues long: Ribosome hibernation promotion factor (190 aa).

The protein belongs to the HPF/YfiA ribosome-associated protein family. Long HPF subfamily. In terms of assembly, interacts with 100S ribosomes.

Its subcellular location is the cytoplasm. Functionally, required for dimerization of active 70S ribosomes into 100S ribosomes in stationary phase; 100S ribosomes are translationally inactive and sometimes present during exponential growth. In Staphylococcus aureus (strain COL), this protein is Ribosome hibernation promotion factor.